We begin with the raw amino-acid sequence, 228 residues long: Urease accessory protein UreF (228 aa).

It belongs to the UreF family. As to quaternary structure, ureD, UreF and UreG form a complex that acts as a GTP-hydrolysis-dependent molecular chaperone, activating the urease apoprotein by helping to assemble the nickel containing metallocenter of UreC. The UreE protein probably delivers the nickel.

The protein resides in the cytoplasm. Its function is as follows. Required for maturation of urease via the functional incorporation of the urease nickel metallocenter. The sequence is that of Urease accessory protein UreF from Prochlorococcus marinus (strain MIT 9301).